The chain runs to 375 residues: Probable UDP-N-acetylglucosamine 2-epimerase (375 aa).

This sequence belongs to the UDP-N-acetylglucosamine 2-epimerase family.

The protein resides in the cytoplasm. The enzyme catalyses UDP-N-acetyl-alpha-D-glucosamine = UDP-N-acetyl-alpha-D-mannosamine. It participates in glycan metabolism; exopolysaccharide EPS I biosynthesis. Its function is as follows. May be involved in synthesis of N-acetyltrideoxygalactose, a component of exopolysaccharide EPS I which functions as a virulence factor. The chain is Probable UDP-N-acetylglucosamine 2-epimerase (epsC) from Ralstonia nicotianae (strain ATCC BAA-1114 / GMI1000) (Ralstonia solanacearum).